The sequence spans 350 residues: Protein RecA (350 aa).

67–74 (GPESSGKT) lines the ATP pocket.

This sequence belongs to the RecA family.

The protein localises to the cytoplasm. Its function is as follows. Can catalyze the hydrolysis of ATP in the presence of single-stranded DNA, the ATP-dependent uptake of single-stranded DNA by duplex DNA, and the ATP-dependent hybridization of homologous single-stranded DNAs. It interacts with LexA causing its activation and leading to its autocatalytic cleavage. This Chromobacterium violaceum (strain ATCC 12472 / DSM 30191 / JCM 1249 / CCUG 213 / NBRC 12614 / NCIMB 9131 / NCTC 9757 / MK) protein is Protein RecA.